Reading from the N-terminus, the 3630-residue chain is Trimeric autotransporter adhesin AtaA (3630 aa).

Residues 1–23 (MNKIYKVIWNATLLAWVAVSELA) form the signal peptide. Positions 24–3487 (KGKTKSTTSK…TNQAVVNYLG (3464 aa)) are surface exposed passenger domain. The tract at residues 108 to 315 (SIAIGENAQG…ASDAVTVAQL (208 aa)) is N-terminal YadA-like head. The tract at residues 316–2904 (DKAYDDTNGR…GRAATEEQLK (2589 aa)) is N-terminal stalk. The segment at 2905-3169 (AVITSNITEV…DSDAVNVAQL (265 aa)) is C-terminal YadA-like head. Residues 3170 to 3561 (KAVGNQVVTT…DVEKKANAGI (392 aa)) are C-terminal stalk. The interval 3539–3574 (LDNAFRITNNRIDDVEKKANAGIAAAMALESAPYVP) is outer membrane translocation of the passenger domain. Beta stranded transmembrane passes span 3575–3585 (GKYTYAAGAAY), 3589–3599 (ENAVGVTLRKT), 3608–3614 (TGGVAAA), and 3618–3629 (DASVRIGISGVI). The translocator domain stretch occupies residues 3575–3630 (GKYTYAAGAAYHGGENAVGVTLRKTADNGRWSITGGVAAASQGDASVRIGISGVID).

It belongs to the autotransporter-2 (AT-2) (TC 1.B.40) family. As to quaternary structure, homotrimer. Interacts with TpgA.

It is found in the cell surface. Its subcellular location is the cell outer membrane. Its function is as follows. Responsible for autoagglutination, and for adhesion to abiotic and biotic surfaces such as polystyrene (PS), type I collagen, polypropylene (PP), polyvinylchloride (PVC), glass and stainless steel (SS). Adhesion is much stronger than that mediated by Yersinia YadA in a comparative assay. Confers autoagglutination and binding to PS, type I collagen, PP, PVC, glass and SS upon expression in Acinetobacter baylyi strain ADP1. Involved in rapid, irreversible adherence to polyurethane. Forms an unusual biofilm. An extended, surface exposed fiber binds to quartz crystals, PS and glass. It can be removed by washing in distilled water. The protein is Trimeric autotransporter adhesin AtaA of Acinetobacter sp. (strain Tol 5).